A 197-amino-acid chain; its full sequence is RNA pyrophosphohydrolase (197 aa).

One can recognise a Nudix hydrolase domain in the interval 6–149; it reads GYRPNVGIVI…KRDVYRRAMK (144 aa). A Nudix box motif is present at residues 38-59; the sequence is GGINEGETPEQAMFRELFEEVG. A disordered region spans residues 170-197; that stretch reads ETKKAETGKKQPYYHKYAPQNKKGRKRR.

It belongs to the Nudix hydrolase family. RppH subfamily. It depends on a divalent metal cation as a cofactor.

Its function is as follows. Accelerates the degradation of transcripts by removing pyrophosphate from the 5'-end of triphosphorylated RNA, leading to a more labile monophosphorylated state that can stimulate subsequent ribonuclease cleavage. This is RNA pyrophosphohydrolase from Actinobacillus succinogenes (strain ATCC 55618 / DSM 22257 / CCUG 43843 / 130Z).